The chain runs to 956 residues: Translation initiation factor IF-2 (956 aa).

Positions 68–357 are disordered; sequence APEAAAPKAP…GVSVPRGDGN (290 aa). Low complexity-rich tracts occupy residues 86–123, 141–156, 164–175, and 212–235; these read AKPA…APAV, PGNN…PRAG, PAAAPASGAGRP, and GPRP…RPAA. Gly residues-rich tracts occupy residues 236–257 and 276–324; these read GSGG…GGGN and RGAG…GAGR. Basic residues predominate over residues 325–334; that stretch reads GKQRKSKRAK. A tr-type G domain is found at 449–620; the sequence is ARPPVVTVMG…AVMLTADAAL (172 aa). The tract at residues 458–465 is G1; sequence GHVDHGKT. 458-465 lines the GTP pocket; the sequence is GHVDHGKT. Residues 483-487 are G2; sequence GITQH. The segment at 508-511 is G3; the sequence is DTPG. Residues 508–512 and 562–565 contribute to the GTP site; these read DTPGH and NKID. A G4 region spans residues 562–565; the sequence is NKID. Residues 598-600 are G5; that stretch reads SAR.

Belongs to the TRAFAC class translation factor GTPase superfamily. Classic translation factor GTPase family. IF-2 subfamily.

Its subcellular location is the cytoplasm. Functionally, one of the essential components for the initiation of protein synthesis. Protects formylmethionyl-tRNA from spontaneous hydrolysis and promotes its binding to the 30S ribosomal subunits. Also involved in the hydrolysis of GTP during the formation of the 70S ribosomal complex. This chain is Translation initiation factor IF-2, found in Renibacterium salmoninarum (strain ATCC 33209 / DSM 20767 / JCM 11484 / NBRC 15589 / NCIMB 2235).